Here is a 949-residue protein sequence, read N- to C-terminus: Protocadherin alpha-11 (949 aa).

A signal peptide spans 1–29 (MFGFQRRGLGTPRLQLWLLLLEFWEVGSG). 6 Cadherin domains span residues 30 to 133 (QLHY…PPVF), 157 to 242 (ASDA…DPDF), 243 to 349 (DKSE…SPEV), 350 to 454 (AVTS…APAF), 455 to 564 (AQPE…APAL), and 580 to 677 (VPRS…APKA). At 30–696 (QLHYSVSEEA…SPEAALVDVN (667 aa)) the chain is on the extracellular side. Asn265 and Asn304 each carry an N-linked (GlcNAc...) asparagine glycan. An N-linked (GlcNAc...) asparagine glycan is attached at Asn547. A helical membrane pass occupies residues 697-717 (VYLIIAICVVSSLLVLTLLLY). Residues 718–949 (TALWCSATPT…GNSTTDNSDQ (232 aa)) are Cytoplasmic-facing. PXXP repeat units follow at residues 733–736 (PGKP) and 773–776 (PSLP). The segment at 733-893 (PGKPTLVCSR…PDKFIIPGSP (161 aa)) is 6 X 4 AA repeats of P-X-X-P. 3 disordered regions span residues 753–807 (RRQR…DWRY), 826–858 (ILRA…PPVG), and 870–889 (YGPG…KFII). A compositionally biased stretch (basic and acidic residues) spans 780–789 (NKEEEGERQE). PXXP repeat units lie at residues 795-798 (PGQP), 831-834 (PGGP), 872-875 (PGNP), and 890-893 (PGSP). The interval 900–949 (QEPANSQIDKSDFITFGKKEETKKKKKKKKGNKTQEKKEKGNSTTDNSDQ) is disordered. The span at 908-922 (DKSDFITFGKKEETK) shows a compositional bias: basic and acidic residues.

It is found in the cell membrane. Functionally, potential calcium-dependent cell-adhesion protein. May be involved in the establishment and maintenance of specific neuronal connections in the brain. The sequence is that of Protocadherin alpha-11 (PCDHA11) from Pan troglodytes (Chimpanzee).